The sequence spans 199 residues: Dephospho-CoA kinase (199 aa).

Residues 3–199 form the DPCK domain; sequence RIGLTGGIGS…HCKYLQIAQT (197 aa). 11–16 lines the ATP pocket; the sequence is GSGKST.

It belongs to the CoaE family.

Its subcellular location is the cytoplasm. It catalyses the reaction 3'-dephospho-CoA + ATP = ADP + CoA + H(+). The protein operates within cofactor biosynthesis; coenzyme A biosynthesis; CoA from (R)-pantothenate: step 5/5. Catalyzes the phosphorylation of the 3'-hydroxyl group of dephosphocoenzyme A to form coenzyme A. This Coxiella burnetii (strain RSA 493 / Nine Mile phase I) protein is Dephospho-CoA kinase.